The sequence spans 291 residues: Methylsterol monooxygenase 1 (291 aa).

2 consecutive transmembrane segments (helical) span residues 55 to 75 (LIVH…FQFL) and 100 to 120 (MLLF…YYFT). One can recognise a Fatty acid hydroxylase domain in the interval 145 to 274 (CAVIEDTWHY…FTWWDRLFDT (130 aa)). Residues 157 to 161 (HRALH) carry the Histidine box-1 motif. The Histidine box-2 signature appears at 170–174 (HKVHH). The helical transmembrane segment at 199-219 (FFIGTMVFCNHMILLWAWVTF) threads the bilayer. The short motif at 249–255 (FHDFHHM) is the Histidine box-3 element.

Belongs to the sterol desaturase family. Fe cation is required as a cofactor.

The protein localises to the endoplasmic reticulum membrane. It catalyses the reaction 4,4-dimethyl-5alpha-cholest-7-en-3beta-ol + 6 Fe(II)-[cytochrome b5] + 3 O2 + 5 H(+) = 4alpha-carboxy-4beta-methyl-5alpha-cholest-7-ene-3beta-ol + 6 Fe(III)-[cytochrome b5] + 4 H2O. The protein operates within steroid biosynthesis; zymosterol biosynthesis; zymosterol from lanosterol: step 3/6. In terms of biological role, catalyzes the first step in the removal of the two C-4 methyl groups of 4,4-dimethylzymosterol. The chain is Methylsterol monooxygenase 1 (msmo1) from Danio rerio (Zebrafish).